The chain runs to 845 residues: Prickle-like protein 2 (845 aa).

One can recognise a PET domain in the interval 18–126 (FDFQRSSTSD…NVRPFPVTMT (109 aa)). Ser92 carries the phosphoserine modification. LIM zinc-binding domains lie at 128-193 (AICE…CLKP), 193-253 (PRCA…LYAE), and 253-317 (EYCD…EDPN). 2 disordered regions span residues 314-346 (EDPN…NKGK) and 483-546 (YSDM…GSME). Positions 318 to 327 (GSDSSDSAFQ) are enriched in polar residues. Ser319, Ser321, and Ser322 each carry phosphoserine. 3 positions are modified to phosphothreonine: Thr535, Thr537, and Thr540. Residues Ser544 and Ser547 each carry the phosphoserine modification. The disordered stretch occupies residues 558-581 (AEGGAKRQEHLSRFSMPDLSKDSG). A phosphoserine mark is found at Ser608 and Ser643. The segment at 642 to 700 (QSFDFDGGIASSKLPGQEGVHIQPMSERTRRRTTSRDDNRRFRPHRSRRSRRSRSDNAL) is disordered. Positions 683-693 (FRPHRSRRSRR) are enriched in basic residues. Ser732 carries the phosphoserine modification. Residues 823 to 845 (STLGGRGQLHSRKRQKSKNCIIS) form a disordered region. Cys842 carries the post-translational modification Cysteine methyl ester. Cys842 carries S-farnesyl cysteine lipidation. Residues 843-845 (IIS) constitute a propeptide, removed in mature form.

The protein belongs to the prickle / espinas / testin family. In terms of tissue distribution, expressed in the hippocampus and cerebral cortex.

It is found in the nucleus membrane. In Mus musculus (Mouse), this protein is Prickle-like protein 2 (Prickle2).